A 568-amino-acid chain; its full sequence is T-complex protein 1 subunit theta (568 aa).

Lysine 15 participates in a covalent cross-link: Glycyl lysine isopeptide (Lys-Gly) (interchain with G-Cter in ubiquitin). Serine 505 carries the post-translational modification Phosphoserine.

Belongs to the TCP-1 chaperonin family. As to quaternary structure, heterooligomeric complex of about 850 to 900 kDa that forms two stacked rings, 12 to 16 nm in diameter.

It is found in the cytoplasm. Its function is as follows. Molecular chaperone; assists the folding of proteins upon ATP hydrolysis. Known to play a role, in vitro, in the folding of actin and tubulin. In yeast may play a role in mitotic spindle formation. This chain is T-complex protein 1 subunit theta (CCT8), found in Saccharomyces cerevisiae (strain ATCC 204508 / S288c) (Baker's yeast).